The sequence spans 155 residues: Snaclec clone 2100755 (155 aa).

Residues Met1–Ala23 form the signal peptide. 3 disulfide bridges follow: Cys25–Cys36, Cys53–Cys144, and Cys119–Cys136. Positions Tyr32–Lys145 constitute a C-type lectin domain.

It belongs to the snaclec family. Heterodimer; disulfide-linked.

It localises to the secreted. Its function is as follows. Interferes with one step of hemostasis (modulation of platelet aggregation, or coagulation cascade, for example). The chain is Snaclec clone 2100755 from Deinagkistrodon acutus (Hundred-pace snake).